Reading from the N-terminus, the 596-residue chain is Succinate dehydrogenase flavoprotein subunit (596 aa).

FAD is bound by residues 18–23 (GAGGAG), 41–56 (TKLFPTRSHTVAAQGG), and D225. A Tele-8alpha-FAD histidine modification is found at H49. 2 residues coordinate substrate: H246 and T258. The active-site Proton acceptor is the R290. H357 is a binding site for substrate. Residue E391 coordinates FAD. Residue R402 participates in substrate binding. Residue 407–408 (SL) coordinates FAD.

It belongs to the FAD-dependent oxidoreductase 2 family. FRD/SDH subfamily. Part of an enzyme complex containing four subunits: a flavoprotein, an iron-sulfur, cytochrome b-556, and a hydrophobic anchor protein. The cofactor is FAD.

Its subcellular location is the cell inner membrane. The enzyme catalyses a quinone + succinate = fumarate + a quinol. The protein operates within carbohydrate metabolism; tricarboxylic acid cycle; fumarate from succinate (bacterial route): step 1/1. In Rickettsia conorii (strain ATCC VR-613 / Malish 7), this protein is Succinate dehydrogenase flavoprotein subunit (sdhA).